A 185-amino-acid polypeptide reads, in one-letter code: uncharacterized protein (185 aa).

The next 5 membrane-spanning stretches (helical) occupy residues 4 to 24 (TYLT…SLSI), 54 to 74 (LALF…LKLI), 98 to 118 (LRMG…LLQN), 119 to 139 (VIWI…FTVY), and 153 to 173 (FILL…FIFI).

The protein resides in the cell membrane. This is an uncharacterized protein from Bacillus subtilis (strain 168).